The following is a 312-amino-acid chain: Homoserine O-acetyltransferase (312 aa).

Cys-142 functions as the Acyl-thioester intermediate in the catalytic mechanism. Positions 163 and 192 each coordinate substrate. The active-site Proton acceptor is the His-235. Glu-237 is an active-site residue. A substrate-binding site is contributed by Arg-249.

This sequence belongs to the MetA family.

Its subcellular location is the cytoplasm. The enzyme catalyses L-homoserine + acetyl-CoA = O-acetyl-L-homoserine + CoA. Its pathway is amino-acid biosynthesis; L-methionine biosynthesis via de novo pathway; O-acetyl-L-homoserine from L-homoserine: step 1/1. Transfers an acetyl group from acetyl-CoA to L-homoserine, forming acetyl-L-homoserine. This is Homoserine O-acetyltransferase from Ruegeria sp. (strain TM1040) (Silicibacter sp.).